A 295-amino-acid chain; its full sequence is Ribosomal protein L11 methyltransferase (295 aa).

4 residues coordinate S-adenosyl-L-methionine: Thr-150, Gly-171, Asp-193, and Asn-232.

It belongs to the methyltransferase superfamily. PrmA family.

Its subcellular location is the cytoplasm. It carries out the reaction L-lysyl-[protein] + 3 S-adenosyl-L-methionine = N(6),N(6),N(6)-trimethyl-L-lysyl-[protein] + 3 S-adenosyl-L-homocysteine + 3 H(+). Its function is as follows. Methylates ribosomal protein L11. The polypeptide is Ribosomal protein L11 methyltransferase (Neisseria meningitidis serogroup C / serotype 2a (strain ATCC 700532 / DSM 15464 / FAM18)).